Consider the following 311-residue polypeptide: Probable manganese-dependent inorganic pyrophosphatase (311 aa).

The Mn(2+) site is built by H9, D13, D15, D75, H97, and D149.

This sequence belongs to the PPase class C family. Requires Mn(2+) as cofactor.

It localises to the cytoplasm. It carries out the reaction diphosphate + H2O = 2 phosphate + H(+). The polypeptide is Probable manganese-dependent inorganic pyrophosphatase (Shouchella clausii (strain KSM-K16) (Alkalihalobacillus clausii)).